Reading from the N-terminus, the 231-residue chain is Probable transglycosylase SceD (231 aa).

A signal peptide spans 1 to 27 (MKKTLLASSLAVGLGIVAGNAGHEAHA). Positions 93–153 (SAQAPATNNV…ESKASEGSSV (61 aa)) are disordered. A compositionally biased stretch (polar residues) spans 96–116 (APATNNVAPSADQANQVQSQE). Residues 119 to 137 (APQNAQTQQPQASTSNNSQ) are compositionally biased toward low complexity. The span at 138–153 (VTATPTESKASEGSSV) shows a compositional bias: polar residues.

Belongs to the transglycosylase family. SceD subfamily.

Its subcellular location is the secreted. In terms of biological role, is able to cleave peptidoglycan and affects clumping and separation of bacterial cells. The polypeptide is Probable transglycosylase SceD (sceD) (Staphylococcus aureus (strain bovine RF122 / ET3-1)).